Consider the following 827-residue polypeptide: Glycerol-3-phosphate acyltransferase (827 aa).

The HXXXXD motif signature appears at 309 to 314 (CHRSHI).

The protein belongs to the GPAT/DAPAT family.

It localises to the cell inner membrane. The catalysed reaction is sn-glycerol 3-phosphate + an acyl-CoA = a 1-acyl-sn-glycero-3-phosphate + CoA. It participates in phospholipid metabolism; CDP-diacylglycerol biosynthesis; CDP-diacylglycerol from sn-glycerol 3-phosphate: step 1/3. In Ectopseudomonas mendocina (strain ymp) (Pseudomonas mendocina), this protein is Glycerol-3-phosphate acyltransferase.